The following is a 510-amino-acid chain: GTPase Der (510 aa).

2 consecutive EngA-type G domains span residues proline 3–leucine 166 and isoleucine 220–threonine 393. GTP-binding positions include glycine 9–serine 16, aspartate 56–isoleucine 60, asparagine 118–aspartate 121, glycine 226–serine 233, aspartate 273–valine 277, and asparagine 338–aspartate 341. A KH-like domain is found at glutamine 394–asparagine 478.

The protein belongs to the TRAFAC class TrmE-Era-EngA-EngB-Septin-like GTPase superfamily. EngA (Der) GTPase family. As to quaternary structure, associates with the 50S ribosomal subunit.

In terms of biological role, GTPase that plays an essential role in the late steps of ribosome biogenesis. In Haemophilus ducreyi (strain 35000HP / ATCC 700724), this protein is GTPase Der.